The chain runs to 128 residues: MRFCLMVTGPAYGSQHASSAWLFARELLAQGHSVESVFFYREGVLNASELTAPASDEVDMTRNWQQLHQQHGVALNVCVAAALRRGVSDKQEAANLGLAAANLAEGFQLTGLGALAEAALSCDRLVQF.

Catalysis depends on Cys78, which acts as the Cysteine persulfide intermediate.

The protein belongs to the DsrE/TusD family. Heterohexamer, formed by a dimer of trimers. The hexameric TusBCD complex contains 2 copies each of TusB, TusC and TusD. The TusBCD complex interacts with TusE.

Its subcellular location is the cytoplasm. Functionally, part of a sulfur-relay system required for 2-thiolation of 5-methylaminomethyl-2-thiouridine (mnm(5)s(2)U) at tRNA wobble positions. Accepts sulfur from TusA and transfers it in turn to TusE. This is Sulfurtransferase TusD from Erwinia tasmaniensis (strain DSM 17950 / CFBP 7177 / CIP 109463 / NCPPB 4357 / Et1/99).